The sequence spans 900 residues: MPPPQHPPNYYAPRRSISTITGPNRRDVDAFYQNNFPEKNGGSSGEHVPEYQASGQQHRPSIMSGQSHQNNHLPTKNYSYEPLRFSPPNVTPPPLQFSTNTDGNRKNQRVRFNELPNYSTPNHYSVPPRKCSLAPNFFSSQNSHHMYPDQYTPRTWQNNEFMPNHQVHPYHANHQQQHPQQHWRNQAASNGNHNPMYMRKHSAGHGIEIKLDHVDNPFGNPSHDMMDVTSGQPVKSEMLSPIKMETTDPSQQIASPSFLMTSTSLLKQHLHKKSHHNVPSRKASIMALKSQLRTPRGTPLNISTVPGTELPYTPPPILAPMRNGSGLFCQIVKSANSSLPVAEQSPDAPSCSTNGVDGDMKHLMNGKKRSEDGDGPSRKNGFFYMAQQMNQTNFANELEALRKESWASTSSADEKMQTERKESLESIRKASCMSDSYYEIEEGPKISDPNPHINLGKNYQARVKKWCDRQVSTSERDAIEDRDEIVFSSEILQDIDPEQITAFELLACSQACPRAGRNKELALHLLMENKGNIEAAVEDLLRSDTLDWEHYSSVFGYMYNDSVLWTPDEIYQFQDAIYQSEKDFDKVAVELPGKSVKECVQFYYTWKKDCPDDYRKLRNLRRKRQLLDINLQKNQSEEPVVPAKKISIIESGDSDNESNATDSSFIGNGHMEFRDRAFTSPMMSSPREEPIIGLSPSSKDLFGIQKNYQPTAPRAHHTPSASASKKGAQPSADGFFHCRLCDKCFEKVKSLNAHMKSHAMKARAEQEAKAHDAQVAAAAAAQLTSAVGNVVGNPVATSPLNSFANGHLGISIPSTIGNLTPQQLTPQQLNLNQQLQTQLNSLSNQMSLNSPLTPQQQLQQFTQQHLMARAMQQNLFQPVTSTPLVQPTHPLIQAGLHSIN.

Disordered regions lie at residues 1–75, 340–380, and 406–425; these read MPPP…HLPT, PVAE…SRKN, and WASTSSADEKMQTERKESLE. Polar residues predominate over residues 53-75; the sequence is ASGQQHRPSIMSGQSHQNNHLPT. Basic and acidic residues-rich tracts occupy residues 358-377 and 412-425; these read GDMKHLMNGKKRSEDGDGPS and ADEKMQTERKESLE. Residues 451–544 enclose the ELM2 domain; the sequence is PHINLGKNYQ…AAVEDLLRSD (94 aa). An SANT domain is found at 560–611; the sequence is NDSVLWTPDEIYQFQDAIYQSEKDFDKVAVELPGKSVKECVQFYYTWKKDCP. Residues 710-729 form a disordered region; sequence PTAPRAHHTPSASASKKGAQ. The C2H2-type zinc finger occupies 736–758; the sequence is FHCRLCDKCFEKVKSLNAHMKSH.

In terms of assembly, may be a component of a histone deacetylase complex containing saeg-2, saeg-1 and hda-2. May interact with egl-4. As to expression, ubiquitously expressed.

The protein localises to the nucleus. In terms of biological role, as a likely component of a histone deacetylase complex, together with saeg-2 and hda-2, functions downstream of the cAMP-dependent kinase egl-4 to regulate the expression of genes required for egg-laying and foraging. The sequence is that of Suppressor of activated egl-4 protein 1 from Caenorhabditis elegans.